The primary structure comprises 554 residues: Wee1-like protein kinase 2-B (554 aa).

Disordered stretches follow at residues 1–86 and 145–182; these read MRMA…GGEC and TLVNVNPFTPQSYRQTHFQPNGKRKERPEDDCSSDSQM. Phosphoserine is present on Ser38. Polar residues-rich tracts occupy residues 38-48 and 147-163; these read SPVSSWRTNNC and VNVNPFTPQSYRQTHFQ. The Protein kinase domain occupies 213-487; sequence FLEIEKIGAG…AKNSVLRRCV (275 aa). Residues 219-227 and Lys242 each bind ATP; that span reads IGAGEFGSV. Asp340 (proton acceptor) is an active-site residue. Mg(2+)-binding residues include Asn345 and Asp377. Residues 490 to 516 adopt a coiled-coil conformation; sequence AAELQKQLNVEKFKTAMLERELQAAKL.

It belongs to the protein kinase superfamily. Ser/Thr protein kinase family. WEE1 subfamily. Interacts with cdca3. In terms of processing, ubiquitinated and degraded at the onset of G2/M phase. Post-translationally, phosphorylated during M and G1 phases. Interacts with cdca3 when phosphorylated at Ser-38.

The protein localises to the nucleus. It catalyses the reaction L-tyrosyl-[protein] + ATP = O-phospho-L-tyrosyl-[protein] + ADP + H(+). In terms of biological role, oocyte and early embryo-specific protein tyrosine kinase that phosphorylates and inhibits cdk1 and acts as a regulator of meiosis in oocytes. Required to ensure the meiotic cell cycle in oocytes by phosphorylating cdk1 at 'Tyr-15', leading to inhibit cdk1 activity and prevent meiosis. This is Wee1-like protein kinase 2-B (wee2-b) from Xenopus laevis (African clawed frog).